Reading from the N-terminus, the 164-residue chain is Photosystem II extrinsic protein V (164 aa).

The first 27 residues, 1–27 (MIPNRKIQLSLFAVIIVFETLLNQVYA), serve as a signal peptide directing secretion. Residues cysteine 64, cysteine 67, histidine 68, and methionine 131 each coordinate heme c.

This sequence belongs to the cytochrome c family. PsbV subfamily. PSII is composed of 1 copy each of membrane proteins PsbA, PsbB, PsbC, PsbD, PsbE, PsbF, PsbH, PsbI, PsbJ, PsbK, PsbL, PsbM, PsbT, PsbY, PsbZ, Psb30/Ycf12, at least 3 peripheral proteins of the oxygen-evolving complex and a large number of cofactors. It forms dimeric complexes. The extrinsic subunits in red algae are PsbO (OEC33), PsbQ', cytochrome c-550 and PsbU. Heme c is required as a cofactor.

Its subcellular location is the plastid. The protein localises to the chloroplast thylakoid membrane. Its function is as follows. One of the extrinsic, lumenal subunits of photosystem II (PSII). PSII is a light-driven water plastoquinone oxidoreductase, using light energy to abstract electrons from H(2)O, generating a proton gradient subsequently used for ATP formation. The extrinsic proteins stabilize the structure of photosystem II oxygen-evolving complex (OEC), the ion environment of oxygen evolution and protect the OEC against heat-induced inactivation. The polypeptide is Photosystem II extrinsic protein V (Gracilaria tenuistipitata var. liui (Red alga)).